Consider the following 244-residue polypeptide: Large ribosomal subunit protein uL30 (244 aa).

A disordered region spans residues methionine 1–alanine 37.

It belongs to the universal ribosomal protein uL30 family.

Functionally, binds to G-rich structures in 28S rRNA and in mRNAs. Plays a regulatory role in the translation apparatus; inhibits cell-free translation of mRNAs. This is Large ribosomal subunit protein uL30 (rpl-7) from Caenorhabditis elegans.